Consider the following 1119-residue polypeptide: Protein translocase subunit SecA (1119 aa).

Residues Q175, G213–T217, and D714 each bind ATP. Residues C1106, C1108, C1117, and C1118 each contribute to the Zn(2+) site.

Belongs to the SecA family. As to quaternary structure, monomer and homodimer. Part of the essential Sec protein translocation apparatus which comprises SecA, SecYEG and auxiliary proteins SecDF. Other proteins may also be involved. The cofactor is Zn(2+).

Its subcellular location is the cell inner membrane. It is found in the cytoplasm. It carries out the reaction ATP + H2O + cellular proteinSide 1 = ADP + phosphate + cellular proteinSide 2.. In terms of biological role, part of the Sec protein translocase complex. Interacts with the SecYEG preprotein conducting channel. Has a central role in coupling the hydrolysis of ATP to the transfer of proteins into and across the cell membrane, serving as an ATP-driven molecular motor driving the stepwise translocation of polypeptide chains across the membrane. This chain is Protein translocase subunit SecA, found in Azobacteroides pseudotrichonymphae genomovar. CFP2.